Consider the following 327-residue polypeptide: MSSLVTLNNGLKMPLVGLGCWKIDKKVCANQIYEAIKLGYRLFDGACDYGNEKEVGEGIRKAISEGLVSRKDIFVVSKLWNNFHHPDHVKLALKKTLSDMGLDYLDLYYIHFPIAFKYVPFEEKYPPGFYTGADDEKKGHITEAHVPIIDTYRALEECVDEGLIKSIGVSNFQGSLIQDLLRGCRIKPVALQIEHHPYLTQEHLVEFCKLHDIQVVAYSSFGPQSFIEMDLQLAKTTPTLFENDVIKKVSQNHPGSTTSQVLLRWATQRGIAVIPKSSKKERLLGNLEIEKKFTLTEQELKDISALNANIRFNDPWTWLDGKFPTFA.

The active-site Proton donor is the Tyr-49. His-111 is a binding site for substrate. NADP(+) is bound at residue 219-286 (SSFGPQSFIE…SSKKERLLGN (68 aa)).

The protein belongs to the aldo/keto reductase family. In terms of assembly, monomer.

It is found in the cytoplasm. The protein localises to the nucleus. It carries out the reaction an alditol + NAD(+) = an aldose + NADH + H(+). It catalyses the reaction an alditol + NADP(+) = an aldose + NADPH + H(+). Its function is as follows. Aldose reductase with a broad substrate specificity. Reduces the cytotoxic compound methylglyoxal (MG) to acetol and (R)-lactaldehyde under stress conditions. MG is synthesized via a bypath of glycolysis from dihydroxyacetone phosphate and is believed to play a role in cell cycle regulation and stress adaptation. In pentose-fermenting yeasts, aldose reductase catalyzes the reduction of xylose into xylitol. The purified enzyme catalyzes this reaction, but the inability of S.cerevisiae to grow on xylose as sole carbon source indicates that the physiological function is more likely methylglyoxal reduction. In Saccharomyces cerevisiae (strain ATCC 204508 / S288c) (Baker's yeast), this protein is NADPH-dependent aldose reductase GRE3.